The chain runs to 355 residues: Uroporphyrinogen decarboxylase (355 aa).

Substrate contacts are provided by residues 23-27 (RQAGR), D72, Y148, S203, and H321.

Belongs to the uroporphyrinogen decarboxylase family. As to quaternary structure, homodimer.

It is found in the cytoplasm. The enzyme catalyses uroporphyrinogen III + 4 H(+) = coproporphyrinogen III + 4 CO2. The protein operates within porphyrin-containing compound metabolism; protoporphyrin-IX biosynthesis; coproporphyrinogen-III from 5-aminolevulinate: step 4/4. Functionally, catalyzes the decarboxylation of four acetate groups of uroporphyrinogen-III to yield coproporphyrinogen-III. This Chloroflexus aurantiacus (strain ATCC 29366 / DSM 635 / J-10-fl) protein is Uroporphyrinogen decarboxylase.